Reading from the N-terminus, the 207-residue chain is Large ribosomal subunit protein uL4 (207 aa).

The interval 44–77 (LRQGTHKTKGRSEVRGGGRKPWRQKGTGRARQGS) is disordered. Basic residues predominate over residues 60–71 (GGRKPWRQKGTG).

This sequence belongs to the universal ribosomal protein uL4 family. Part of the 50S ribosomal subunit.

Its function is as follows. One of the primary rRNA binding proteins, this protein initially binds near the 5'-end of the 23S rRNA. It is important during the early stages of 50S assembly. It makes multiple contacts with different domains of the 23S rRNA in the assembled 50S subunit and ribosome. Forms part of the polypeptide exit tunnel. This is Large ribosomal subunit protein uL4 from Shouchella clausii (strain KSM-K16) (Alkalihalobacillus clausii).